We begin with the raw amino-acid sequence, 359 residues long: 3-dehydroquinate synthase (359 aa).

NAD(+)-binding positions include 71–76 (DGEAHK), 105–109 (GVIGD), 129–130 (TT), Lys142, Lys151, and 169–172 (TLHT). Glu184, His247, and His264 together coordinate Zn(2+).

The protein belongs to the sugar phosphate cyclases superfamily. Dehydroquinate synthase family. Requires NAD(+) as cofactor. The cofactor is Co(2+). Zn(2+) is required as a cofactor.

Its subcellular location is the cytoplasm. The enzyme catalyses 7-phospho-2-dehydro-3-deoxy-D-arabino-heptonate = 3-dehydroquinate + phosphate. It participates in metabolic intermediate biosynthesis; chorismate biosynthesis; chorismate from D-erythrose 4-phosphate and phosphoenolpyruvate: step 2/7. In terms of biological role, catalyzes the conversion of 3-deoxy-D-arabino-heptulosonate 7-phosphate (DAHP) to dehydroquinate (DHQ). The protein is 3-dehydroquinate synthase of Neisseria meningitidis serogroup A / serotype 4A (strain DSM 15465 / Z2491).